The primary structure comprises 145 residues: Mite group 2 allergen Eur m 2 (145 aa).

An N-terminal signal peptide occupies residues 1–16 (MYKILCLSLLVAAVAA). Cystine bridges form between C24–C135, C37–C43, and C89–C94.

It belongs to the NPC2 family.

The protein localises to the secreted. The protein is Mite group 2 allergen Eur m 2 (EURM2) of Euroglyphus maynei (Mayne's house dust mite).